Reading from the N-terminus, the 481-residue chain is UDP-N-acetylmuramoyl-L-alanyl-D-glutamate--L-lysine ligase (481 aa).

UDP-N-acetyl-alpha-D-muramoyl-L-alanyl-D-glutamate is bound at residue Ser-42. 118-124 (GTKGKTT) serves as a coordination point for ATP. UDP-N-acetyl-alpha-D-muramoyl-L-alanyl-D-glutamate-binding positions include 160-161 (TT), Ser-187, and Arg-195. Lys-229 carries the N6-carboxylysine modification. The short motif at 404-407 (DDPN) is the L-lysine recognition motif element.

It belongs to the MurCDEF family. MurE subfamily. In terms of processing, carboxylation is probably crucial for Mg(2+) binding and, consequently, for the gamma-phosphate positioning of ATP.

Its subcellular location is the cytoplasm. The enzyme catalyses UDP-N-acetyl-alpha-D-muramoyl-L-alanyl-D-glutamate + L-lysine + ATP = UDP-N-acetyl-alpha-D-muramoyl-L-alanyl-gamma-D-glutamyl-L-lysine + ADP + phosphate + H(+). It functions in the pathway cell wall biogenesis; peptidoglycan biosynthesis. Functionally, catalyzes the addition of L-lysine to the nucleotide precursor UDP-N-acetylmuramoyl-L-alanyl-D-glutamate (UMAG) in the biosynthesis of bacterial cell-wall peptidoglycan. The protein is UDP-N-acetylmuramoyl-L-alanyl-D-glutamate--L-lysine ligase of Streptococcus sanguinis (strain SK36).